The sequence spans 1190 residues: Pyruvate-flavodoxin oxidoreductase (1190 aa).

4Fe-4S ferredoxin-type domains lie at E687–Y716 and F743–K773. C696, C699, C702, C706, C752, C755, C758, C762, C826, C829, C854, and C1089 together coordinate [4Fe-4S] cluster.

This sequence belongs to the pyruvate:ferredoxin/flavodoxin oxidoreductase family. [4Fe-4S] cluster is required as a cofactor.

It catalyses the reaction oxidized [flavodoxin] + pyruvate + CoA + 2 H(+) = reduced [flavodoxin] + acetyl-CoA + CO2. Functionally, oxidoreductase required for the transfer of electrons from pyruvate to flavodoxin, which reduces nitrogenase. The polypeptide is Pyruvate-flavodoxin oxidoreductase (nifJ) (Trichormus variabilis (strain ATCC 29413 / PCC 7937) (Anabaena variabilis)).